A 262-amino-acid chain; its full sequence is Proline-rich protein 23C (262 aa).

Disordered regions lie at residues 1–52 and 225–262; these read MGSR…AGTP and VPSSPLQPLPPSPSPGPHARPELPERPPCKVRRRLFQE. Pro residues predominate over residues 226–242; it reads PSSPLQPLPPSPSPGPH. Residues 243–252 are compositionally biased toward basic and acidic residues; that stretch reads ARPELPERPP. Positions 253-262 are enriched in basic residues; that stretch reads CKVRRRLFQE.

Belongs to the PRR23 family.

The protein is Proline-rich protein 23C (PRR23C) of Homo sapiens (Human).